A 395-amino-acid polypeptide reads, in one-letter code: Na(+)/H(+) antiporter NhaA 1 (395 aa).

The next 11 membrane-spanning stretches (helical) occupy residues 11 to 31 (FFSS…LAMV), 63 to 83 (MLLW…GLEV), 99 to 119 (VFPV…YLAF), 129 to 149 (GWAI…ALLG), 158 to 178 (IFLM…IALF), 183 to 203 (LSML…ALNL), 223 to 243 (VLKS…MIPL), 258 to 278 (VLHP…NAGV), 282 to 302 (GVTL…GLFI), 332 to 352 (IMAV…IATL), and 364 to 384 (WAKL…YLIL).

The protein belongs to the NhaA Na(+)/H(+) (TC 2.A.33) antiporter family.

The protein resides in the cell inner membrane. It catalyses the reaction Na(+)(in) + 2 H(+)(out) = Na(+)(out) + 2 H(+)(in). In terms of biological role, na(+)/H(+) antiporter that extrudes sodium in exchange for external protons. In Klebsiella pneumoniae subsp. pneumoniae (strain ATCC 700721 / MGH 78578), this protein is Na(+)/H(+) antiporter NhaA 1.